A 197-amino-acid chain; its full sequence is Phosphoheptose isomerase (197 aa).

The SIS domain maps to 34-196 (MVQCLLGGNK…DRTLFPQDEQ (163 aa)). 49–51 (NGG) serves as a coordination point for substrate. The Zn(2+) site is built by His-58 and Glu-62. Residues Glu-62, 91–92 (ND), 117–119 (STS), Ser-122, and Gln-172 contribute to the substrate site. Zn(2+) contacts are provided by Gln-172 and His-180.

The protein belongs to the SIS family. GmhA subfamily. As to quaternary structure, homotetramer. Requires Zn(2+) as cofactor.

The protein localises to the cytoplasm. It catalyses the reaction 2 D-sedoheptulose 7-phosphate = D-glycero-alpha-D-manno-heptose 7-phosphate + D-glycero-beta-D-manno-heptose 7-phosphate. The protein operates within carbohydrate biosynthesis; D-glycero-D-manno-heptose 7-phosphate biosynthesis; D-glycero-alpha-D-manno-heptose 7-phosphate and D-glycero-beta-D-manno-heptose 7-phosphate from sedoheptulose 7-phosphate: step 1/1. Functionally, catalyzes the isomerization of sedoheptulose 7-phosphate in D-glycero-D-manno-heptose 7-phosphate. This chain is Phosphoheptose isomerase, found in Shewanella oneidensis (strain ATCC 700550 / JCM 31522 / CIP 106686 / LMG 19005 / NCIMB 14063 / MR-1).